Consider the following 2122-residue polypeptide: Pecanex-like protein 2 (2122 aa).

A run of 2 helical transmembrane segments spans residues leucine 36–phenylalanine 53 and alanine 60–histidine 82. Disordered stretches follow at residues glutamine 92–alanine 164 and glutamine 180–proline 250. Composition is skewed to polar residues over residues serine 146–serine 157 and alanine 185–arginine 203. The N-linked (GlcNAc...) asparagine glycan is linked to asparagine 288. 2 stretches are compositionally biased toward low complexity: residues valine 392–alanine 407 and proline 458–threonine 476. Disordered stretches follow at residues valine 392–asparagine 556 and valine 575–threonine 634. A compositionally biased stretch (basic and acidic residues) spans serine 528–lysine 538. The N-linked (GlcNAc...) asparagine glycan is linked to asparagine 556. Residues threonine 599–lysine 618 are compositionally biased toward basic and acidic residues. Over residues aspartate 625–threonine 634 the composition is skewed to polar residues. A run of 13 helical transmembrane segments spans residues valine 825–phenylalanine 845, leucine 849–valine 869, glutamine 882–leucine 902, histidine 933–isoleucine 953, glycine 976–cysteine 998, histidine 1010–serine 1030, leucine 1080–leucine 1100, phenylalanine 1105–leucine 1125, tyrosine 1174–asparagine 1194, serine 1218–phenylalanine 1238, glutamate 1245–leucine 1265, phenylalanine 1270–alanine 1290, and threonine 1305–isoleucine 1325. N-linked (GlcNAc...) asparagine glycosylation is found at asparagine 1393, asparagine 1534, and asparagine 1802. Disordered regions lie at residues serine 1858–proline 1943 and serine 1955–histidine 1991. A compositionally biased stretch (basic and acidic residues) spans glutamate 1888–arginine 1898. Residues serine 1922–glycine 1942 are compositionally biased toward polar residues. Residues serine 1968–serine 1981 show a composition bias toward low complexity. The N-linked (GlcNAc...) asparagine glycan is linked to asparagine 2039. A disordered region spans residues valine 2097–glutamine 2122. Residues threonine 2112 to glutamine 2122 show a composition bias toward polar residues.

It belongs to the pecanex family.

The protein resides in the membrane. In terms of biological role, may play a role in tumorigenesis. The protein is Pecanex-like protein 2 of Mus musculus (Mouse).